A 318-amino-acid polypeptide reads, in one-letter code: Aspartate carbamoyltransferase catalytic subunit (318 aa).

The carbamoyl phosphate site is built by arginine 66 and threonine 67. Lysine 94 lines the L-aspartate pocket. Carbamoyl phosphate-binding residues include arginine 116, histidine 144, and glutamine 147. L-aspartate is bound by residues arginine 177 and arginine 231. The carbamoyl phosphate site is built by glycine 272 and proline 273.

The protein belongs to the aspartate/ornithine carbamoyltransferase superfamily. ATCase family. In terms of assembly, heterododecamer (2C3:3R2) of six catalytic PyrB chains organized as two trimers (C3), and six regulatory PyrI chains organized as three dimers (R2).

It carries out the reaction carbamoyl phosphate + L-aspartate = N-carbamoyl-L-aspartate + phosphate + H(+). It participates in pyrimidine metabolism; UMP biosynthesis via de novo pathway; (S)-dihydroorotate from bicarbonate: step 2/3. Its function is as follows. Catalyzes the condensation of carbamoyl phosphate and aspartate to form carbamoyl aspartate and inorganic phosphate, the committed step in the de novo pyrimidine nucleotide biosynthesis pathway. The polypeptide is Aspartate carbamoyltransferase catalytic subunit (Frankia casuarinae (strain DSM 45818 / CECT 9043 / HFP020203 / CcI3)).